A 102-amino-acid chain; its full sequence is NADH-quinone oxidoreductase subunit K (102 aa).

3 helical membrane passes run 4–24, 30–50, and 62–82; these read IPME…LVGL, MLFV…AFIV, and VMFL…LALL.

It belongs to the complex I subunit 4L family. In terms of assembly, NDH-1 is composed of 14 different subunits. Subunits NuoA, H, J, K, L, M, N constitute the membrane sector of the complex.

The protein localises to the cell inner membrane. It carries out the reaction a quinone + NADH + 5 H(+)(in) = a quinol + NAD(+) + 4 H(+)(out). NDH-1 shuttles electrons from NADH, via FMN and iron-sulfur (Fe-S) centers, to quinones in the respiratory chain. The immediate electron acceptor for the enzyme in this species is believed to be ubiquinone. Couples the redox reaction to proton translocation (for every two electrons transferred, four hydrogen ions are translocated across the cytoplasmic membrane), and thus conserves the redox energy in a proton gradient. In Chromohalobacter salexigens (strain ATCC BAA-138 / DSM 3043 / CIP 106854 / NCIMB 13768 / 1H11), this protein is NADH-quinone oxidoreductase subunit K.